The chain runs to 109 residues: Large ribosomal subunit protein uL22 (109 aa).

Belongs to the universal ribosomal protein uL22 family. As to quaternary structure, part of the 50S ribosomal subunit.

Functionally, this protein binds specifically to 23S rRNA; its binding is stimulated by other ribosomal proteins, e.g. L4, L17, and L20. It is important during the early stages of 50S assembly. It makes multiple contacts with different domains of the 23S rRNA in the assembled 50S subunit and ribosome. The globular domain of the protein is located near the polypeptide exit tunnel on the outside of the subunit, while an extended beta-hairpin is found that lines the wall of the exit tunnel in the center of the 70S ribosome. This Neisseria gonorrhoeae (strain ATCC 700825 / FA 1090) protein is Large ribosomal subunit protein uL22.